Consider the following 175-residue polypeptide: NADH-quinone oxidoreductase subunit I (175 aa).

2 consecutive 4Fe-4S ferredoxin-type domains span residues 69–98 (KRDE…IEAA) and 115–144 (KKFE…LDGT). Cys78, Cys81, Cys84, Cys88, Cys124, Cys127, Cys130, and Cys134 together coordinate [4Fe-4S] cluster.

This sequence belongs to the complex I 23 kDa subunit family. As to quaternary structure, NDH-1 is composed of 14 different subunits. Subunits NuoA, H, J, K, L, M, N constitute the membrane sector of the complex. It depends on [4Fe-4S] cluster as a cofactor.

It is found in the cell inner membrane. It carries out the reaction a quinone + NADH + 5 H(+)(in) = a quinol + NAD(+) + 4 H(+)(out). Functionally, NDH-1 shuttles electrons from NADH, via FMN and iron-sulfur (Fe-S) centers, to quinones in the respiratory chain. The immediate electron acceptor for the enzyme in this species is believed to be ubiquinone. Couples the redox reaction to proton translocation (for every two electrons transferred, four hydrogen ions are translocated across the cytoplasmic membrane), and thus conserves the redox energy in a proton gradient. The sequence is that of NADH-quinone oxidoreductase subunit I from Leptospira biflexa serovar Patoc (strain Patoc 1 / Ames).